The sequence spans 256 residues: MRRMIPTSFSSKFQGVLSMNALRCYVSEFISTFFFVLAAVGSVMSSRKLMAGDVSGPFGVLIPAIANALALSSSVYISWNVSGGHVNPAVTFAMAVAGRISVPTAMFYWTSQMIASVMACLVLKVTVMEQHVPIYKIAGEMTGFGASVLEGVLAFVLVYTVFTASDPRRGLPLAVGPIFIGFVAGANVLAAGPFSGGSMNPACAFGSAMVYGSFKNQAVYWVGPLLGGATAALVYDNVVVPVEDDRGSSTGDAIGV.

An N-acetylmethionine modification is found at Met-1. The next 5 helical transmembrane spans lie at 24 to 44, 57 to 77, 89 to 109, 144 to 164, and 171 to 191; these read CYVSEFISTFFFVLAAVGSVM, PFGVLIPAIANALALSSSVYI, AVTFAMAVAGRISVPTAMFYW, FGASVLEGVLAFVLVYTVFTA, and LPLAVGPIFIGFVAGANVLAA. An NPA 1 motif is present at residues 87–89; sequence NPA. The short motif at 200 to 202 is the NPA 2 element; sequence NPA. A helical transmembrane segment spans residues 222 to 242; sequence VGPLLGGATAALVYDNVVVPV. Ser-249 carries the post-translational modification Phosphoserine.

It belongs to the MIP/aquaporin (TC 1.A.8) family. TIP (TC 1.A.8.10) subfamily.

The protein resides in the membrane. Functionally, potential aquaporin, which may facilitate the transport of water and small neutral solutes across cell membranes. The protein is Probable aquaporin TIP5-1 (TIP5-1) of Arabidopsis thaliana (Mouse-ear cress).